Here is a 111-residue protein sequence, read N- to C-terminus: Cell division protein FtsB (111 aa).

Over 1–3 the chain is Cytoplasmic; sequence MRL. Residues 4-21 traverse the membrane as a helical segment; that stretch reads LFLVLLVLLGLIQYPLWL. At 22 to 111 the chain is on the periplasmic side; the sequence is GKGGWFKVWD…PGQTASAPRR (90 aa). A coiled-coil region spans residues 31–62; the sequence is DLQRQVAAQHETNDGLRARNAALEAEVRDLAT. The interval 88 to 111 is disordered; sequence VPPGTPVPQPAPGAPGQTASAPRR. A compositionally biased stretch (pro residues) spans 90–100; the sequence is PGTPVPQPAPG. Positions 101–111 are enriched in low complexity; sequence APGQTASAPRR.

It belongs to the FtsB family. As to quaternary structure, part of a complex composed of FtsB, FtsL and FtsQ.

It is found in the cell inner membrane. Functionally, essential cell division protein. May link together the upstream cell division proteins, which are predominantly cytoplasmic, with the downstream cell division proteins, which are predominantly periplasmic. The sequence is that of Cell division protein FtsB from Bordetella petrii (strain ATCC BAA-461 / DSM 12804 / CCUG 43448).